A 317-amino-acid chain; its full sequence is Transaldolase (317 aa).

K126 (schiff-base intermediate with substrate) is an active-site residue.

It belongs to the transaldolase family. Type 1 subfamily. In terms of assembly, homodimer.

It localises to the cytoplasm. The catalysed reaction is D-sedoheptulose 7-phosphate + D-glyceraldehyde 3-phosphate = D-erythrose 4-phosphate + beta-D-fructose 6-phosphate. It functions in the pathway carbohydrate degradation; pentose phosphate pathway; D-glyceraldehyde 3-phosphate and beta-D-fructose 6-phosphate from D-ribose 5-phosphate and D-xylulose 5-phosphate (non-oxidative stage): step 2/3. Functionally, transaldolase is important for the balance of metabolites in the pentose-phosphate pathway. In Burkholderia mallei (strain SAVP1), this protein is Transaldolase.